We begin with the raw amino-acid sequence, 221 residues long: Octanoyltransferase (221 aa).

The BPL/LPL catalytic domain occupies Lys-36 to Ala-221. Residues Arg-81 to His-88, Ala-154 to Gly-156, and Gly-167 to Ala-169 each bind substrate. Catalysis depends on Cys-185, which acts as the Acyl-thioester intermediate.

The protein belongs to the LipB family.

The protein localises to the cytoplasm. It carries out the reaction octanoyl-[ACP] + L-lysyl-[protein] = N(6)-octanoyl-L-lysyl-[protein] + holo-[ACP] + H(+). It participates in protein modification; protein lipoylation via endogenous pathway; protein N(6)-(lipoyl)lysine from octanoyl-[acyl-carrier-protein]: step 1/2. Functionally, catalyzes the transfer of endogenously produced octanoic acid from octanoyl-acyl-carrier-protein onto the lipoyl domains of lipoate-dependent enzymes. Lipoyl-ACP can also act as a substrate although octanoyl-ACP is likely to be the physiological substrate. This Parabacteroides distasonis (strain ATCC 8503 / DSM 20701 / CIP 104284 / JCM 5825 / NCTC 11152) protein is Octanoyltransferase.